The primary structure comprises 279 residues: Large ribosomal subunit protein uL2 (279 aa).

The segment at Val-223–Arg-279 is disordered. The segment covering Leu-269 to Arg-279 has biased composition (basic residues).

The protein belongs to the universal ribosomal protein uL2 family. Part of the 50S ribosomal subunit. Forms a bridge to the 30S subunit in the 70S ribosome.

In terms of biological role, one of the primary rRNA binding proteins. Required for association of the 30S and 50S subunits to form the 70S ribosome, for tRNA binding and peptide bond formation. It has been suggested to have peptidyltransferase activity; this is somewhat controversial. Makes several contacts with the 16S rRNA in the 70S ribosome. The sequence is that of Large ribosomal subunit protein uL2 from Paracoccus denitrificans (strain Pd 1222).